Consider the following 333-residue polypeptide: Gap junction alpha-4 protein (333 aa).

The Cytoplasmic portion of the chain corresponds to 1–20 (MGDWGFLEKLLDQVQEHSTV). Residues 21–40 (VGKIWLTVLFIFRILILGLA) traverse the membrane as a helical segment. Residues 41-76 (GESVWGDEQSDFECNTAQPGCTNVCYDQAFPISHIR) are Extracellular-facing. A helical membrane pass occupies residues 77–99 (YWVLQFLFVSTPTLIYLGHVIYL). Over 100–148 (SRREERLRQKEGELRALPSKDLHVERALAAIEHQMAKISVAEDGRLRIR) the chain is Cytoplasmic. The helical transmembrane segment at 149–171 (GALMGTYVVSVLCKSVLEAGFLY) threads the bilayer. The Extracellular portion of the chain corresponds to 172–208 (GQWRLYGWTMEPVFVCQRAPCPHIVDCYVSRPTEKTI). A helical transmembrane segment spans residues 209–231 (FIIFMLVVGVISLVLNLLELVHL). The Cytoplasmic segment spans residues 232–333 (LCRCVSREIK…NSSASKKQYV (102 aa)). The interval 292-333 (ANLTTEERLTSSRPPPFVNTAPQGGRKSPSRPNSSASKKQYV) is disordered. Positions 321–333 (SRPNSSASKKQYV) are enriched in polar residues.

The protein belongs to the connexin family. Alpha-type (group II) subfamily. As to quaternary structure, a connexon is composed of a hexamer of connexins. Highly expressed in lung.

The protein resides in the cell membrane. Its subcellular location is the cell junction. The protein localises to the gap junction. Functionally, one gap junction consists of a cluster of closely packed pairs of transmembrane channels, the connexons, through which materials of low MW diffuse from one cell to a neighboring cell. This chain is Gap junction alpha-4 protein (Gja4), found in Mus musculus (Mouse).